The chain runs to 334 residues: Ribosomal RNA small subunit methyltransferase H (334 aa).

The disordered stretch occupies residues 1 to 21; the sequence is MNALPIRTAAPSGHSGGHSST. Residues 52 to 54, D71, F98, D119, and Q126 each bind S-adenosyl-L-methionine; that span reads GGY.

The protein belongs to the methyltransferase superfamily. RsmH family.

It is found in the cytoplasm. It catalyses the reaction cytidine(1402) in 16S rRNA + S-adenosyl-L-methionine = N(4)-methylcytidine(1402) in 16S rRNA + S-adenosyl-L-homocysteine + H(+). In terms of biological role, specifically methylates the N4 position of cytidine in position 1402 (C1402) of 16S rRNA. This is Ribosomal RNA small subunit methyltransferase H from Granulibacter bethesdensis (strain ATCC BAA-1260 / CGDNIH1).